A 373-amino-acid chain; its full sequence is tRNA/tmRNA (uracil-C(5))-methyltransferase (373 aa).

Residues glutamine 190, tyrosine 219, asparagine 224, glutamate 240, and aspartate 300 each coordinate S-adenosyl-L-methionine. Cysteine 325 functions as the Nucleophile in the catalytic mechanism. Glutamate 359 serves as the catalytic Proton acceptor.

The protein belongs to the class I-like SAM-binding methyltransferase superfamily. RNA M5U methyltransferase family. TrmA subfamily.

It carries out the reaction uridine(54) in tRNA + S-adenosyl-L-methionine = 5-methyluridine(54) in tRNA + S-adenosyl-L-homocysteine + H(+). The catalysed reaction is uridine(341) in tmRNA + S-adenosyl-L-methionine = 5-methyluridine(341) in tmRNA + S-adenosyl-L-homocysteine + H(+). In terms of biological role, dual-specificity methyltransferase that catalyzes the formation of 5-methyluridine at position 54 (m5U54) in all tRNAs, and that of position 341 (m5U341) in tmRNA (transfer-mRNA). In Chromohalobacter salexigens (strain ATCC BAA-138 / DSM 3043 / CIP 106854 / NCIMB 13768 / 1H11), this protein is tRNA/tmRNA (uracil-C(5))-methyltransferase.